Consider the following 116-residue polypeptide: Non-specific lipid-transfer protein C, cotyledon-specific isoform (116 aa).

A signal peptide spans 1 to 24; sequence MKNVVFSVLLLLSFLFCLANTNEA. 4 cysteine pairs are disulfide-bonded: cysteine 28–cysteine 76, cysteine 38–cysteine 53, cysteine 54–cysteine 98, and cysteine 74–cysteine 112.

This sequence belongs to the plant LTP family.

Functionally, plant non-specific lipid-transfer proteins transfer phospholipids as well as galactolipids across membranes. May play a role in wax or cutin deposition in the cell walls of expanding epidermal cells and certain secretory tissues. The chain is Non-specific lipid-transfer protein C, cotyledon-specific isoform from Ricinus communis (Castor bean).